We begin with the raw amino-acid sequence, 732 residues long: Anthranilate synthase (732 aa).

A Glutamine amidotransferase type-1 domain is found at 533–728 (RVLLVDHDDS…MDRLAAGALT (196 aa)). 583–585 (GPG) provides a ligand contact to L-glutamine. Cys610 acts as the Nucleophile; for GATase activity in catalysis. L-glutamine-binding positions include Gln614 and 660–661 (SL). Catalysis depends on for GATase activity residues His699 and Glu701.

The catalysed reaction is chorismate + L-glutamine = anthranilate + pyruvate + L-glutamate + H(+). The protein operates within amino-acid biosynthesis; L-tryptophan biosynthesis; L-tryptophan from chorismate: step 1/5. This is Anthranilate synthase (trpE(G)) from Azospirillum brasilense.